A 422-amino-acid polypeptide reads, in one-letter code: L-threonine dehydratase biosynthetic IlvA (422 aa).

Position 60 is an N6-(pyridoxal phosphate)lysine (lysine 60). Pyridoxal 5'-phosphate is bound by residues asparagine 87, 190–194 (GGGGL), and serine 315. An ACT-like domain is found at 339–413 (HYFIVNFPQR…KPFHYVEVNK (75 aa)).

This sequence belongs to the serine/threonine dehydratase family. Homotetramer. It depends on pyridoxal 5'-phosphate as a cofactor.

The catalysed reaction is L-threonine = 2-oxobutanoate + NH4(+). It participates in amino-acid biosynthesis; L-isoleucine biosynthesis; 2-oxobutanoate from L-threonine: step 1/1. Its function is as follows. Catalyzes the anaerobic formation of alpha-ketobutyrate and ammonia from threonine in a two-step reaction. The first step involved a dehydration of threonine and a production of enamine intermediates (aminocrotonate), which tautomerizes to its imine form (iminobutyrate). Both intermediates are unstable and short-lived. The second step is the nonenzymatic hydrolysis of the enamine/imine intermediates to form 2-ketobutyrate and free ammonia. In the low water environment of the cell, the second step is accelerated by RidA. The chain is L-threonine dehydratase biosynthetic IlvA (ilvA) from Bacillus subtilis (strain 168).